A 78-amino-acid chain; its full sequence is uncharacterized protein (78 aa).

Residues 1 to 45 (MPVIAIIAIVIIVIILNKTGVSDSLTALTLATVAALLTGGGAAGA) form the signal peptide.

It to E.coli YkfL.

This is an uncharacterized protein from Escherichia coli (strain K12).